The sequence spans 205 residues: ATP-dependent Clp protease proteolytic subunit 2 (205 aa).

S100 functions as the Nucleophile in the catalytic mechanism. The active site involves H125.

The protein belongs to the peptidase S14 family. Fourteen ClpP subunits assemble into 2 heptameric rings which stack back to back to give a disk-like structure with a central cavity, resembling the structure of eukaryotic proteasomes.

The protein resides in the cytoplasm. The enzyme catalyses Hydrolysis of proteins to small peptides in the presence of ATP and magnesium. alpha-casein is the usual test substrate. In the absence of ATP, only oligopeptides shorter than five residues are hydrolyzed (such as succinyl-Leu-Tyr-|-NHMec, and Leu-Tyr-Leu-|-Tyr-Trp, in which cleavage of the -Tyr-|-Leu- and -Tyr-|-Trp bonds also occurs).. Functionally, cleaves peptides in various proteins in a process that requires ATP hydrolysis. Has a chymotrypsin-like activity. Plays a major role in the degradation of misfolded proteins. This Chlamydia abortus (strain DSM 27085 / S26/3) (Chlamydophila abortus) protein is ATP-dependent Clp protease proteolytic subunit 2.